The chain runs to 302 residues: Large ribosomal subunit protein uL29m (302 aa).

The protein belongs to the universal ribosomal protein uL29 family. In terms of assembly, component of the mitochondrial large ribosomal subunit. Mature mitochondrial ribosomes consist of a small (37S) and a large (54S) subunit. The 37S subunit contains at least 33 different proteins and 1 molecule of RNA (15S). The 54S subunit contains at least 45 different proteins and 1 molecule of RNA (21S).

It is found in the mitochondrion. The sequence is that of Large ribosomal subunit protein uL29m (MRPL4) from Debaryomyces hansenii (strain ATCC 36239 / CBS 767 / BCRC 21394 / JCM 1990 / NBRC 0083 / IGC 2968) (Yeast).